The chain runs to 548 residues: Dihydroxy-acid dehydratase (548 aa).

Asp78 lines the Mg(2+) pocket. Residue Cys119 coordinates [2Fe-2S] cluster. Mg(2+) is bound by residues Asp120 and Lys121. Lys121 bears the N6-carboxylysine mark. Cys185 is a [2Fe-2S] cluster binding site. Mg(2+) is bound at residue Glu438. The active-site Proton acceptor is the Ser464.

This sequence belongs to the IlvD/Edd family. Homodimer. Requires [2Fe-2S] cluster as cofactor. Mg(2+) serves as cofactor.

It catalyses the reaction (2R)-2,3-dihydroxy-3-methylbutanoate = 3-methyl-2-oxobutanoate + H2O. The enzyme catalyses (2R,3R)-2,3-dihydroxy-3-methylpentanoate = (S)-3-methyl-2-oxopentanoate + H2O. It participates in amino-acid biosynthesis; L-isoleucine biosynthesis; L-isoleucine from 2-oxobutanoate: step 3/4. Its pathway is amino-acid biosynthesis; L-valine biosynthesis; L-valine from pyruvate: step 3/4. In terms of biological role, functions in the biosynthesis of branched-chain amino acids. Catalyzes the dehydration of (2R,3R)-2,3-dihydroxy-3-methylpentanoate (2,3-dihydroxy-3-methylvalerate) into 2-oxo-3-methylpentanoate (2-oxo-3-methylvalerate) and of (2R)-2,3-dihydroxy-3-methylbutanoate (2,3-dihydroxyisovalerate) into 2-oxo-3-methylbutanoate (2-oxoisovalerate), the penultimate precursor to L-isoleucine and L-valine, respectively. This is Dihydroxy-acid dehydratase from Methanothrix thermoacetophila (strain DSM 6194 / JCM 14653 / NBRC 101360 / PT) (Methanosaeta thermophila).